A 103-amino-acid chain; its full sequence is Large ribosomal subunit protein uL24 (103 aa).

The protein belongs to the universal ribosomal protein uL24 family. As to quaternary structure, part of the 50S ribosomal subunit.

Its function is as follows. One of two assembly initiator proteins, it binds directly to the 5'-end of the 23S rRNA, where it nucleates assembly of the 50S subunit. Functionally, one of the proteins that surrounds the polypeptide exit tunnel on the outside of the subunit. The polypeptide is Large ribosomal subunit protein uL24 (Vesicomyosocius okutanii subsp. Calyptogena okutanii (strain HA)).